The following is a 464-amino-acid chain: tRNA modification GTPase MnmE (464 aa).

Positions 26, 92, and 131 each coordinate (6S)-5-formyl-5,6,7,8-tetrahydrofolate. A TrmE-type G domain is found at 227-385; it reads GIKVAILGRV…LISALKDYVS (159 aa). Asn237 provides a ligand contact to K(+). GTP is bound by residues 237–242, 256–262, and 281–284; these read NAGKSS, SNIAGTT, and DTAG. Residue Ser241 coordinates Mg(2+). K(+)-binding residues include Ser256, Ile258, and Thr261. Thr262 serves as a coordination point for Mg(2+). A (6S)-5-formyl-5,6,7,8-tetrahydrofolate-binding site is contributed by Lys464.

The protein belongs to the TRAFAC class TrmE-Era-EngA-EngB-Septin-like GTPase superfamily. TrmE GTPase family. In terms of assembly, homodimer. Heterotetramer of two MnmE and two MnmG subunits. K(+) serves as cofactor.

Its subcellular location is the cytoplasm. Functionally, exhibits a very high intrinsic GTPase hydrolysis rate. Involved in the addition of a carboxymethylaminomethyl (cmnm) group at the wobble position (U34) of certain tRNAs, forming tRNA-cmnm(5)s(2)U34. This chain is tRNA modification GTPase MnmE, found in Brachyspira hyodysenteriae (strain ATCC 49526 / WA1).